Reading from the N-terminus, the 362-residue chain is 3-dehydroquinate synthase (362 aa).

NAD(+)-binding positions include 72 to 77 (SGEQAK), 106 to 110 (GVVGD), 130 to 131 (TT), Lys-142, and Lys-151. Zn(2+) contacts are provided by Glu-184, His-246, and His-263.

This sequence belongs to the sugar phosphate cyclases superfamily. Dehydroquinate synthase family. Requires NAD(+) as cofactor. The cofactor is Co(2+). Zn(2+) is required as a cofactor.

The protein localises to the cytoplasm. The enzyme catalyses 7-phospho-2-dehydro-3-deoxy-D-arabino-heptonate = 3-dehydroquinate + phosphate. It functions in the pathway metabolic intermediate biosynthesis; chorismate biosynthesis; chorismate from D-erythrose 4-phosphate and phosphoenolpyruvate: step 2/7. Its function is as follows. Catalyzes the conversion of 3-deoxy-D-arabino-heptulosonate 7-phosphate (DAHP) to dehydroquinate (DHQ). The polypeptide is 3-dehydroquinate synthase (Bacillus subtilis (strain 168)).